We begin with the raw amino-acid sequence, 477 residues long: Glutamate--tRNA ligase 1 (477 aa).

Positions 12–22 (PSPTGALHLGN) match the 'HIGH' region motif. Residues 253 to 257 (PLSKR) carry the 'KMSKS' region motif. Lys-256 contacts ATP.

This sequence belongs to the class-I aminoacyl-tRNA synthetase family. Glutamate--tRNA ligase type 1 subfamily. In terms of assembly, monomer.

Its subcellular location is the cytoplasm. It carries out the reaction tRNA(Glu) + L-glutamate + ATP = L-glutamyl-tRNA(Glu) + AMP + diphosphate. In terms of biological role, catalyzes the attachment of glutamate to tRNA(Glu) in a two-step reaction: glutamate is first activated by ATP to form Glu-AMP and then transferred to the acceptor end of tRNA(Glu). The polypeptide is Glutamate--tRNA ligase 1 (Halorhodospira halophila (strain DSM 244 / SL1) (Ectothiorhodospira halophila (strain DSM 244 / SL1))).